The chain runs to 245 residues: Methyltransferase-like protein 27 (245 aa).

The polypeptide is Methyltransferase-like protein 27 (Homo sapiens (Human)).